Consider the following 462-residue polypeptide: NAD-capped RNA hydrolase NUDT12 (462 aa).

ANK repeat units lie at residues 11 to 40 (EIVT…SLLN), 45 to 74 (NGWT…DRSI), and 78 to 98 (SRQT…ANLL). K185 carries the N6-succinyllysine modification. Zn(2+) is bound by residues C284 and C287. K292 carries the post-translational modification N6-succinyllysine. 2 residues coordinate Zn(2+): C302 and C307. Residues Y318, 354–356 (AGF), E370, E374, and E415 each bind substrate. The 135-residue stretch at 319–453 (PRVDPVVIMQ…SRAIAHQLIK (135 aa)) folds into the Nudix hydrolase domain. Residues A354, E370, E374, and E415 each coordinate Mg(2+). The Nudix box signature appears at 355–376 (GFIEPGETIEDAVRREVEEESG). The short motif at 460–462 (PNL) is the Microbody targeting signal element.

Belongs to the Nudix hydrolase family. NudC subfamily. In terms of assembly, homodimer. Homodimerization is essential for its catalytic activity and protein stability. Interacts (via ANK repeats) with BLMH. The cofactor is Mg(2+). It depends on Zn(2+) as a cofactor.

Its subcellular location is the cytoplasm. The protein resides in the peroxisome. The protein localises to the cytoplasmic granule. It catalyses the reaction a 5'-end NAD(+)-phospho-ribonucleoside in mRNA + H2O = a 5'-end phospho-adenosine-phospho-ribonucleoside in mRNA + beta-nicotinamide D-ribonucleotide + 2 H(+). It carries out the reaction NAD(+) + H2O = beta-nicotinamide D-ribonucleotide + AMP + 2 H(+). The enzyme catalyses NADH + H2O = reduced beta-nicotinamide D-ribonucleotide + AMP + 2 H(+). The catalysed reaction is NADPH + H2O = reduced beta-nicotinamide D-ribonucleotide + adenosine 2',5'-bisphosphate + 2 H(+). In terms of biological role, mRNA decapping enzyme that specifically removes the nicotinamide adenine dinucleotide (NAD) cap from a subset of mRNAs by hydrolyzing the diphosphate linkage to produce nicotinamide mononucleotide (NMN) and 5' monophosphate mRNA. The NAD-cap is present at the 5'-end of some RNAs; in contrast to the canonical N7 methylguanosine (m7G) cap, the NAD cap promotes mRNA decay. Preferentially acts on NAD-capped transcripts in response to nutrient stress. Also acts on free nicotinamide adenine dinucleotide molecules: hydrolyzes NAD(H) into NMN(H) and AMP, and NADPH into NMNH and 2',5'-ADP. May act to regulate the concentration of peroxisomal nicotinamide nucleotide cofactors required for oxidative metabolism in this organelle. Regulates the levels of circadian clock components PER1, PER2, PER3 and CRY2 in the liver. This Macaca fascicularis (Crab-eating macaque) protein is NAD-capped RNA hydrolase NUDT12.